Reading from the N-terminus, the 370-residue chain is Chloromuconate cycloisomerase (370 aa).

Lysine 165 acts as the Proton acceptor in catalysis. Mn(2+) is bound by residues aspartate 194, glutamate 220, and aspartate 245. Catalysis depends on glutamate 323, which acts as the Proton donor.

It belongs to the mandelate racemase/muconate lactonizing enzyme family. Mn(2+) is required as a cofactor.

The enzyme catalyses 2-[(2R)-2-chloro-2,5-dihydro-5-oxofuryl]acetate = 3-chloro-cis,cis-muconate + H(+). It functions in the pathway aromatic compound metabolism; 3-chlorocatechol degradation. This is Chloromuconate cycloisomerase (tcbD) from Pseudomonas sp. (strain P51).